Consider the following 290-residue polypeptide: Malonyl-[acyl-carrier protein] O-methyltransferase (290 aa).

Belongs to the methyltransferase superfamily.

The enzyme catalyses malonyl-[ACP] + S-adenosyl-L-methionine = malonyl-[ACP] methyl ester + S-adenosyl-L-homocysteine. It functions in the pathway cofactor biosynthesis; biotin biosynthesis. In terms of biological role, converts the free carboxyl group of a malonyl-thioester to its methyl ester by transfer of a methyl group from S-adenosyl-L-methionine (SAM). It allows to synthesize pimeloyl-ACP via the fatty acid synthetic pathway. This Gallionella capsiferriformans (strain ES-2) (Gallionella ferruginea capsiferriformans (strain ES-2)) protein is Malonyl-[acyl-carrier protein] O-methyltransferase.